The primary structure comprises 689 residues: Solute carrier family 22 member 23 (689 aa).

Disordered regions lie at residues 1–55 and 162–188; these read MAID…PLPA and TASW…GKGN. The N-linked (GlcNAc...) asparagine glycan is linked to Asn24. The span at 165-177 shows a compositional bias: polar residues; it reads WGTTSNRSNSSDT. 2 helical membrane-spanning segments follow: residues 229 to 249 and 253 to 273; these read FSLL…ADWV and PVLL…ALSV. The N-linked (GlcNAc...) asparagine glycan is linked to Asn274. 8 helical membrane-spanning segments follow: residues 283–303, 310–330, 339–359, 466–486, 489–509, 541–561, 572–592, and 601–621; these read FFEG…RIEL, FIIT…MPGL, VLQA…SIFP, TMAS…KFLG, GGLL…LGLL, IAFS…SVFF, CGGL…APII, and FLHH…ILLL.

The protein belongs to the major facilitator (TC 2.A.1) superfamily. Organic cation transporter (TC 2.A.1.19) family.

The protein resides in the membrane. This chain is Solute carrier family 22 member 23 (Slc22a23), found in Mus musculus (Mouse).